A 514-amino-acid polypeptide reads, in one-letter code: GTPase-activating protein gyp1 (514 aa).

Disordered stretches follow at residues Leu-17–Lys-65 and Leu-130–Ser-164. 2 stretches are compositionally biased toward polar residues: residues Trp-18–Pro-28 and Arg-135–Arg-158. The Rab-GAP TBC domain occupies Gly-216–Gly-443.

It localises to the golgi apparatus. Its subcellular location is the golgi stack. The protein localises to the cytoplasm. The protein resides in the nucleus. Stimulates specifically the GTPase activity of ypt1. Functions on the Golgi as a negative regulator of ypt1. This chain is GTPase-activating protein gyp1, found in Schizosaccharomyces pombe (strain 972 / ATCC 24843) (Fission yeast).